A 173-amino-acid chain; its full sequence is Small ribosomal subunit protein uS5 (173 aa).

One can recognise an S5 DRBM domain in the interval 18–81; the sequence is LREKMIAVNR…EQARRGMFKV (64 aa).

Belongs to the universal ribosomal protein uS5 family. In terms of assembly, part of the 30S ribosomal subunit. Contacts proteins S4 and S8.

In terms of biological role, with S4 and S12 plays an important role in translational accuracy. Functionally, located at the back of the 30S subunit body where it stabilizes the conformation of the head with respect to the body. This Bordetella avium (strain 197N) protein is Small ribosomal subunit protein uS5.